Consider the following 60-residue polypeptide: Small integral membrane protein 3 (60 aa).

The chain crosses the membrane as a helical span at residues I20 to C40.

The protein resides in the membrane. The chain is Small integral membrane protein 3 (Smim3) from Rattus norvegicus (Rat).